The primary structure comprises 79 residues: Acyl carrier protein (79 aa).

The region spanning 2-79 (ASKEEILAGL…QDAVDFIXGA (78 aa)) is the Carrier domain. At serine 40 the chain carries O-(pantetheine 4'-phosphoryl)serine.

It belongs to the acyl carrier protein (ACP) family. In terms of processing, 4'-phosphopantetheine is transferred from CoA to a specific serine of apo-ACP by AcpS. This modification is essential for activity because fatty acids are bound in thioester linkage to the sulfhydryl of the prosthetic group.

Its subcellular location is the cytoplasm. It functions in the pathway lipid metabolism; fatty acid biosynthesis. Its function is as follows. Carrier of the growing fatty acid chain in fatty acid biosynthesis. The polypeptide is Acyl carrier protein (Myxococcus xanthus).